The following is an 88-amino-acid chain: Small ribosomal subunit protein eS21 (88 aa).

It belongs to the eukaryotic ribosomal protein eS21 family. In terms of assembly, component of the small ribosomal subunit. Mature ribosomes consist of a small (40S) and a large (60S) subunit. The 40S subunit contains about 33 different proteins and 1 molecule of RNA (18S). The 60S subunit contains about 49 different proteins and 3 molecules of RNA (25S, 5.8S and 5S).

The protein resides in the cytoplasm. In terms of biological role, required for the processing of the 20S rRNA-precursor to mature 18S rRNA in a late step of the maturation of 40S ribosomal subunits. Has a physiological role leading to 18S rRNA stability. In Aspergillus fumigatus (strain ATCC MYA-4609 / CBS 101355 / FGSC A1100 / Af293) (Neosartorya fumigata), this protein is Small ribosomal subunit protein eS21 (rps21).